Consider the following 511-residue polypeptide: Ent-copalyl diphosphate synthase (511 aa).

2 residues coordinate a divalent metal cation: Asp291 and Asp293. The DXDD motif motif lies at 291–294 (DSDD).

The protein belongs to the terpene synthase family. As to quaternary structure, homodimer. The cofactor is a divalent metal cation.

The catalysed reaction is (2E,6E,10E)-geranylgeranyl diphosphate = ent-copalyl diphosphate. Its pathway is antibiotic biosynthesis. In terms of biological role, involved in viguiepinol biosynthesis. Catalyzes the conversion of geranylgeranyl diphosphate (GGDP) into copalyl diphosphate (ent-CDP). This Streptomyces sp. (strain KO-3988) protein is Ent-copalyl diphosphate synthase.